The sequence spans 416 residues: tRNA(Met) cytidine acetate ligase (416 aa).

ATP is bound by residues 7-20, Gly-101, Asn-163, and Arg-188; that span reads VVEY…HLYH.

Belongs to the TmcAL family.

The protein localises to the cytoplasm. The catalysed reaction is cytidine(34) in elongator tRNA(Met) + acetate + ATP = N(4)-acetylcytidine(34) in elongator tRNA(Met) + AMP + diphosphate. In terms of biological role, catalyzes the formation of N(4)-acetylcytidine (ac(4)C) at the wobble position of elongator tRNA(Met), using acetate and ATP as substrates. First activates an acetate ion to form acetyladenylate (Ac-AMP) and then transfers the acetyl group to tRNA to form ac(4)C34. This chain is tRNA(Met) cytidine acetate ligase, found in Bacillus licheniformis (strain ATCC 14580 / DSM 13 / JCM 2505 / CCUG 7422 / NBRC 12200 / NCIMB 9375 / NCTC 10341 / NRRL NRS-1264 / Gibson 46).